Here is a 170-residue protein sequence, read N- to C-terminus: Cathelicidin antimicrobial peptide (170 aa).

The first 30 residues, 1–30 (MKTQRDGHSLGRWSLVLLLLGLVMPLAIVA), serve as a signal peptide directing secretion. Positions 31 to 131 (QVLSYKEAVL…DISCDKDNKR (101 aa)) are cleaved as a propeptide — cathelin-like domain (CLD). 2 disulfide bridges follow: Cys86/Cys97 and Cys108/Cys125. Residues 150-162 (FKRIVQRIKDFLR) are active core.

This sequence belongs to the cathelicidin family. Monomer, homodimer or homotrimer (in vitro). Oligomerizes as tetra- or hexamer in solution (in vitro). Post-translationally, proteolytically cleaved by proteinase PRTN3 into antibacterial peptide LL-37. Proteolytically cleaved by cathepsin CTSG and neutrophil elastase ELANE. In terms of processing, resistant to proteolytic degradation in solution, and when bound to both zwitterionic (mimicking mammalian membranes) and negatively charged membranes (mimicking bacterial membranes). After secretion onto the skin surface, the CAMP gene product is processed by a serine protease-dependent mechanism into multiple novel antimicrobial peptides distinct from and shorter than cathelicidin LL-37. These peptides show enhanced antimicrobial action, acquiring the ability to kill skin pathogens such as S.aureus, E.coli and C.albicans. These peptides have lost the ability to stimulate CXCL8/IL8 release from keratinocytes. The peptides act synergistically, killing bacteria at lower concentrations when present together, and maintain activity at increased salt condition.

The protein localises to the secreted. Its subcellular location is the vesicle. Antimicrobial protein that is an integral component of the innate immune system. Binds to bacterial lipopolysaccharides (LPS). Acts via neutrophil N-formyl peptide receptors to enhance the release of CXCL2. Postsecretory processing generates multiple cathelicidin antimicrobial peptides with various lengths which act as a topical antimicrobial defense in sweat on skin. The unprocessed precursor form, cathelicidin antimicrobial peptide, inhibits the growth of Gram-negative E.coli and E.aerogenes with efficiencies comparable to that of the mature peptide LL-37 (in vitro). Functionally, antimicrobial peptide that is an integral component of the innate immune system. Binds to bacterial lipopolysaccharides (LPS). Causes membrane permeabilization by forming transmembrane pores (in vitro). Causes lysis of E.coli. Exhibits antimicrobial activity against Gram-negative bacteria such as P.aeruginosa, S.typhimurium, E.aerogenes, E.coli and P.syringae, Gram-positive bacteria such as L.monocytogenes, S.epidermidis, S.pyogenes and S.aureus, as well as vancomycin-resistant enterococci (in vitro). Exhibits antimicrobial activity against methicillin-resistant S.aureus, P.mirabilis, and C.albicans in low-salt media, but not in media containing 100 mM NaCl (in vitro). Forms chiral supramolecular assemblies with quinolone signal (PQS) molecules of P.aeruginosa, which may lead to interference of bacterial quorum signaling and perturbance of bacterial biofilm formation. May form supramolecular fiber-like assemblies on bacterial membranes. Induces cytokine and chemokine producation as well as TNF/TNFA and CSF2/GMCSF production in normal human keratinocytes. Exhibits hemolytic activity against red blood cells. In terms of biological role, exhibits antimicrobial activity against E.coli and B.megaterium (in vitro). This chain is Cathelicidin antimicrobial peptide, found in Pan troglodytes (Chimpanzee).